A 118-amino-acid polypeptide reads, in one-letter code: Non-specific lipid-transfer protein D (118 aa).

The N-terminal stretch at 1 to 25 (MAGLMKLACLIFACMIVAGPITSNA) is a signal peptide. 4 disulfide bridges follow: Cys-29–Cys-77, Cys-39–Cys-54, Cys-55–Cys-100, and Cys-75–Cys-114.

It belongs to the plant LTP family.

In terms of biological role, plant non-specific lipid-transfer proteins transfer phospholipids as well as galactolipids across membranes. May play a role in wax or cutin deposition in the cell walls of expanding epidermal cells and certain secretory tissues. The sequence is that of Non-specific lipid-transfer protein D (WAX9D) from Brassica oleracea var. italica (Broccoli).